The chain runs to 355 residues: Type II restriction enzyme CfrBI (355 aa).

It catalyses the reaction Endonucleolytic cleavage of DNA to give specific double-stranded fragments with terminal 5'-phosphates.. In terms of biological role, a P subtype restriction enzyme that recognizes the double-stranded sequence 5'-CCWWGG-3' and cleaves after C-1. This is Type II restriction enzyme CfrBI from Citrobacter freundii.